The chain runs to 758 residues: 1-phosphatidylinositol 4,5-bisphosphate phosphodiesterase delta-4 (758 aa).

A PH domain is found at 16–124 (QLMQAGSPMR…WIQGLEKLIE (109 aa)). Residues 26–53 (KVKSRSWKKQRYFKLQEDCMTIWYNSKK) are substrate binding. EF-hand domains follow at residues 134-169 (LMDQ…MNVD), 170-205 (MSEH…LTQR), and 206-237 (DEVL…GQLE). The Ca(2+) site is built by Asp-147, Asn-149, Asp-151, Arg-153, Glu-158, Asp-183, Ser-185, Ser-187, Thr-189, and Glu-194. Residues 213–243 (QDFSKDGKKLTLLEFVDFLQQGQLEEENTEE) carry the GBA motif. Residues 290–435 (QDMMQPLCHY…LRGKILLKGK (146 aa)) form the PI-PLC X-box domain. The active site involves His-305. Ca(2+) contacts are provided by Asn-306, Glu-335, and Asp-337. Residue His-350 is part of the active site. Residue Glu-384 coordinates Ca(2+). Substrate contacts are provided by Lys-433 and Lys-435. Positions 446 to 468 (EQPDDSLGEVSDEEENIEVEEER) are enriched in acidic residues. The disordered stretch occupies residues 446-479 (EQPDDSLGEVSDEEENIEVEEERNEDKKRAKKSK). The PI-PLC Y-box domain maps to 486-602 (LSDCVIYCKS…GYVLKPSFMR (117 aa)). Ser-515 and Arg-542 together coordinate substrate. The region spanning 602-731 (RHVETTFNPD…SGYRHIHLLS (130 aa)) is the C2 domain. Ca(2+) contacts are provided by Ile-645, Asp-647, Asn-671, Asp-700, Tyr-701, and Asp-702. The PDZ-binding signature appears at 726–729 (HIHL).

Ca(2+) is required as a cofactor.

It localises to the membrane. It is found in the nucleus. The protein localises to the cytoplasm. The protein resides in the endoplasmic reticulum. It carries out the reaction a 1,2-diacyl-sn-glycero-3-phospho-(1D-myo-inositol-4,5-bisphosphate) + H2O = 1D-myo-inositol 1,4,5-trisphosphate + a 1,2-diacyl-sn-glycerol + H(+). The catalysed reaction is a 1,2-diacyl-sn-glycero-3-phospho-(1D-myo-inositol) + H2O = 1D-myo-inositol 1-phosphate + a 1,2-diacyl-sn-glycerol + H(+). In terms of biological role, hydrolyzes the phosphatidylinositol 4,5-bisphosphate (PIP2) to generate 2 second messenger molecules diacylglycerol (DAG) and inositol 1,4,5-trisphosphate (IP3). DAG mediates the activation of protein kinase C (PKC), while IP3 releases Ca(2+) from intracellular stores. In Xenopus laevis (African clawed frog), this protein is 1-phosphatidylinositol 4,5-bisphosphate phosphodiesterase delta-4 (plcd4).